Reading from the N-terminus, the 530-residue chain is Cytochrome P450 monooxygenase apf7 (530 aa).

The helical transmembrane segment at 6–26 threads the bilayer; sequence VSPVSIWVFVIYAVTIIIAIY. Residue N85 is glycosylated (N-linked (GlcNAc...) asparagine). C464 serves as a coordination point for heme.

Belongs to the cytochrome P450 family. It depends on heme as a cofactor.

It is found in the membrane. The protein operates within secondary metabolite biosynthesis. Cytochrome P450 monooxygenase; part of the gene cluster that mediates the biosynthesis of the cyclic tetrapeptide apicidin F (APF). The non-ribosomal peptide synthetase apf1 incorporates four different amino acids to produce apicidin F: L-phenylalanine, D-pipecolic acid (D-pip), N-methoxy-L-tryptophan and L-2-aminooctanedioic acid. L-Phenylalanine is the only proteinogenic amino acid directly used by apf1. The 3 other apf1 substrates are non-proteinogenic and have to be modified by other enzymes of the cluster. Lysine is converted to delta-1-pyrroline-5-carboxylate (P5C) which is reduced to L-pipecolic acid (L-pip) by apf3. L-pip is epimerized to D-pip, probably by apf1 activity, prior to incorporation. L-Tryptophan is N-oxidyzed by one of the cytochrome P450 monooxygenases (apf7 or apf8), and further methylated at the hydroxy group by the O-methyltransferase apf6 to yield N-methoxy-L-tryptophan. The synthesis of the fourth apf1 substrate is more complex. The fatty acid synthase apf5 is involved in the synthesis of the octanoic acid backbone of L-2-aminooctanedioic acid by fixing one acetyl-CoA unit and three malonyl-CoA units. Then one of the cytochrome P450 monooxygenases (apf7 or apf8) may oxidize this backbone to 2-oxooctanoic acid. The aminotransferase apf4 is predicted to catalyze the exchange of the keto group with an amino group. The next step would be the oxidation of 2-aminooctanoic acid by one of the cytochrome P450 monooxygenases (apf7 or apf8). The last step is the oxidation of 2-amino-8-hydroxyoctanoic acid to 2-aminooctanedioic acid is catalyzed by the FAD-dependent monooxygenase apf9. This is Cytochrome P450 monooxygenase apf7 from Gibberella fujikuroi (strain CBS 195.34 / IMI 58289 / NRRL A-6831) (Bakanae and foot rot disease fungus).